The sequence spans 331 residues: UDP-GalNAc:beta-1,3-N-acetylgalactosaminyltransferase 1 (331 aa).

Over 1-20 (MAPAVLTAIPNRMSLRSLKW) the chain is Cytoplasmic. Residues 21–43 (SLLLLSLLSFLVIWYLSLPHYNV) form a helical; Signal-anchor for type II membrane protein membrane-spanning segment. Residues 44 to 331 (IERVNWMYFY…VMLRNTTCHY (288 aa)) lie on the Lumenal side of the membrane. 5 N-linked (GlcNAc...) asparagine glycosylation sites follow: Asn-72, Asn-154, Asn-198, Asn-212, and Asn-326.

The protein belongs to the glycosyltransferase 31 family. Requires Mg(2+) as cofactor.

The protein resides in the golgi apparatus membrane. The enzyme catalyses a globoside Gb3Cer (d18:1(4E)) + UDP-N-acetyl-alpha-D-galactosamine = a globoside Gb4Cer (d18:1(4E)) + UDP + H(+). Its pathway is protein modification; protein glycosylation. Transfers N-acetylgalactosamine onto globotriaosylceramide. Plays a critical role in preimplantation stage embryonic development. This is UDP-GalNAc:beta-1,3-N-acetylgalactosaminyltransferase 1 (B3galnt1) from Rattus norvegicus (Rat).